The sequence spans 313 residues: Ornithine carbamoyltransferase (313 aa).

Residues 57-60, Q84, R108, and 135-138 each bind carbamoyl phosphate; these read STRT and HPTQ. Residues N167, D231, and 235–236 each bind L-ornithine; that span reads SM. Carbamoyl phosphate-binding positions include 272 to 273 and R300; that span reads CL.

This sequence belongs to the aspartate/ornithine carbamoyltransferase superfamily. OTCase family.

It localises to the cytoplasm. It catalyses the reaction carbamoyl phosphate + L-ornithine = L-citrulline + phosphate + H(+). Its pathway is amino-acid biosynthesis; L-arginine biosynthesis; L-arginine from L-ornithine and carbamoyl phosphate: step 1/3. Its function is as follows. Reversibly catalyzes the transfer of the carbamoyl group from carbamoyl phosphate (CP) to the N(epsilon) atom of ornithine (ORN) to produce L-citrulline. This chain is Ornithine carbamoyltransferase, found in Caldanaerobacter subterraneus subsp. tengcongensis (strain DSM 15242 / JCM 11007 / NBRC 100824 / MB4) (Thermoanaerobacter tengcongensis).